A 161-amino-acid chain; its full sequence is Phosphopantetheine adenylyltransferase (161 aa).

A substrate-binding site is contributed by Thr9. ATP contacts are provided by residues 9–10 and His17; that span reads TF. Substrate is bound by residues Lys41, Leu73, and Arg87. Residues 88 to 90, Glu98, and 123 to 129 each bind ATP; these read GLR and YQFISGT.

This sequence belongs to the bacterial CoaD family. In terms of assembly, homohexamer. The cofactor is Mg(2+).

The protein localises to the cytoplasm. It catalyses the reaction (R)-4'-phosphopantetheine + ATP + H(+) = 3'-dephospho-CoA + diphosphate. Its pathway is cofactor biosynthesis; coenzyme A biosynthesis; CoA from (R)-pantothenate: step 4/5. In terms of biological role, reversibly transfers an adenylyl group from ATP to 4'-phosphopantetheine, yielding dephospho-CoA (dPCoA) and pyrophosphate. This is Phosphopantetheine adenylyltransferase from Cupriavidus necator (strain ATCC 17699 / DSM 428 / KCTC 22496 / NCIMB 10442 / H16 / Stanier 337) (Ralstonia eutropha).